A 364-amino-acid polypeptide reads, in one-letter code: DNA replication and repair protein RecF (364 aa).

33–40 contributes to the ATP binding site; it reads GENGSGKT.

Belongs to the RecF family.

Its subcellular location is the cytoplasm. The RecF protein is involved in DNA metabolism; it is required for DNA replication and normal SOS inducibility. RecF binds preferentially to single-stranded, linear DNA. It also seems to bind ATP. The sequence is that of DNA replication and repair protein RecF from Rickettsia felis (strain ATCC VR-1525 / URRWXCal2) (Rickettsia azadi).